The sequence spans 101 residues: MYISRNMDHWNTFIETLRTAFKEGKEQEFLTLLLTPDERDAVGLRLQIVAQLLDKNVPQREIQQNLSTSAATITRGSNMLKMMDPDFLAWVKEQVDAETQS.

The DNA-binding element occupies 59–82 (QREIQQNLSTSAATITRGSNMLKM).

This sequence belongs to the TrpR family. As to quaternary structure, homodimer.

It is found in the cytoplasm. This protein is an aporepressor. When complexed with L-tryptophan it binds the operator region of the trp operon and prevents the initiation of transcription. The protein is Trp operon repressor homolog of Actinobacillus succinogenes (strain ATCC 55618 / DSM 22257 / CCUG 43843 / 130Z).